The chain runs to 852 residues: Polyphosphate kinase (852 aa).

Disordered regions lie at residues Met-1 to Ile-36 and Ser-58 to Lys-82. Positions Val-20–Ile-36 are enriched in basic and acidic residues. Residues Ser-58–Val-67 show a composition bias toward polar residues. ATP is bound at residue Asn-131. Positions Gly-251–Pro-303 are disordered. The tract at residues Arg-258–Pro-303 is insert. Residues Val-270–Glu-289 show a composition bias toward polar residues. The Mg(2+) site is built by Arg-524 and Arg-554. His-584 (phosphohistidine intermediate) is an active-site residue. The ATP site is built by Tyr-617, Arg-713, and His-741.

It belongs to the polyphosphate kinase 1 (PPK1) family. Mg(2+) is required as a cofactor. An intermediate of this reaction is the autophosphorylated ppk in which a phosphate is covalently linked to a histidine residue through a N-P bond.

It catalyses the reaction [phosphate](n) + ATP = [phosphate](n+1) + ADP. Its function is as follows. Catalyzes the reversible transfer of the terminal phosphate of ATP to form a long-chain polyphosphate (polyP). This Rhodopirellula baltica (strain DSM 10527 / NCIMB 13988 / SH1) protein is Polyphosphate kinase.